Consider the following 783-residue polypeptide: MPFLPGKMPKPAVCRRPATSFHADLAGGSRYLYWKHNATPSPHPRRPRVFRVQGDTAMDWQGLRFLGESPVDGYVLQNCTYSPSLVALAFLVACLAGYTALDMVERVGNSLSHPRLWQWIGAFCLGSGIWATHFVAMLAFHAPIALRYDLPITGLSLLIAVAASYLTMYMTARPRFGLLPCLLAACCIGLGIAAMHYTGMAAMRSVATQYYQPSLFALSVLIAIGAAFTALAAVPYLRGRRSARYRYMKLIASLLLAGAIAAMHFTGMAALVLSVPAGTPLELQASADSLRLGWLTGVLASAIAACGIWAAWSEKQRERRLSENSRVNALLNQLDHAHASLRQMARYDSLTGLQNRTAFNEVFVQHLENCRLRGKGLAVMFLDLDHFKRINDSLGHDSGDQLLKIVSERIRSVLRDSDVVARFAGDEFCVLADLTQDHEAHILSQRLMQKMKEPIALDGRTLVMTASVGVSLYPNDGEQCEELLKNAGLALHQSKACGRNNAQFFSRQLLVRATQELQMEEELRQALRDDQLELHYQPILALADGEVHQLEALVRWRHPTQGLLGPDRFIGLAEANGMIDQLDDWVLRRACRDLRSLHLAGHERLRVAVNCCASNLGRASLVDEVRHALEQAGLAACFLELEVTEDALMYNIDQTIPLLERLRELGVSLSIDDFGTGYSSLAYLRRLPLDALKVDRSFIMDIPASQRDMEIAQAIIAMAQKLHLKVVAEGVETPQQLAFLRENHCELVQGYLFSRPLPLAALEEFLRAYRFDAAPPLRSLNQA.

Residues 81–274 form the MHYT domain; the sequence is YSPSLVALAF…FTGMAALVLS (194 aa). The next 7 membrane-spanning stretches (helical) occupy residues 84-104, 120-140, 150-170, 176-196, 215-235, 255-275, and 292-312; these read SLVA…LDMV, IGAF…MLAF, LPIT…TMYM, FGLL…AAMH, LFAL…AAVP, LLAG…VLSV, and LGWL…WAAW. Residues 313–783 lie on the Cytoplasmic side of the membrane; sequence SEKQRERRLS…APPLRSLNQA (471 aa). Residues 375–507 enclose the GGDEF domain; the sequence is KGLAVMFLDL…GRNNAQFFSR (133 aa). An EAL domain is found at 516–770; it reads ELQMEEELRQ…ALEEFLRAYR (255 aa). Residues Gln-537, Glu-551, Arg-555, Asn-610, and Asn-615 each coordinate 3',3'-c-di-GMP. Mg(2+) is bound at residue Glu-551. Asn-610 serves as a coordination point for Mg(2+). Residues Glu-642, Asp-672, and Asp-673 each coordinate Mg(2+). 3',3'-c-di-GMP is bound at residue Asp-672. Arg-696 serves as a coordination point for 3',3'-c-di-GMP. A Mg(2+)-binding site is contributed by Glu-729. 3',3'-c-di-GMP is bound by residues Glu-732 and Tyr-751.

Mg(2+) is required as a cofactor.

The protein resides in the cell inner membrane. It catalyses the reaction 3',3'-c-di-GMP + H2O = 5'-phosphoguanylyl(3'-&gt;5')guanosine + H(+). Its activity is regulated as follows. PDE activity is stimulated by GTP. It could also be stimulated by NO. Its function is as follows. Displays c-di-GMP-specific phosphodiesterase (PDE) activity. Seems to play a specific role in nitric oxide (NO)-induced biofilm dispersion. Enhanced NbdA synthesis in the presence of NO increases PDE activity, leading to reduced cellular c-di-GMP levels and biofilm dispersion. Does not show diguanylate cyclase (DGC) activity. The polypeptide is Cyclic di-GMP phosphodiesterase NbdA (Pseudomonas aeruginosa (strain ATCC 15692 / DSM 22644 / CIP 104116 / JCM 14847 / LMG 12228 / 1C / PRS 101 / PAO1)).